Consider the following 327-residue polypeptide: Tartrate-resistant acid phosphatase type 5 (327 aa).

Positions 1-22 are cleaved as a signal peptide; that stretch reads MDSWVVLLGLQIIWLPLLTHGT. D35, D73, Y76, and N112 together coordinate Fe cation. Residues N118 and N149 are each glycosylated (N-linked (GlcNAc...) asparagine). A disulfide bridge connects residues C163 and C221. Residues H207, H242, and H244 each contribute to the Fe cation site.

Exists either as monomer or, after proteolytic processing, as a dimer of two chains linked by disulfide bond(s). Fe cation is required as a cofactor. As to expression, characteristic constituent of osteoclasts.

The protein localises to the lysosome. The enzyme catalyses a phosphate monoester + H2O = an alcohol + phosphate. Its function is as follows. May play a role in the process of bone resorption. The osteoclastic trap acts on nucleotide tri- and diphosphates with higher affinity, compared with other substrates. This Mus musculus (Mouse) protein is Tartrate-resistant acid phosphatase type 5 (Acp5).